The following is a 391-amino-acid chain: 23S rRNA (uracil(747)-C(5))-methyltransferase RlmC (391 aa).

Residues Cys5, Cys13, Cys16, and Cys95 each contribute to the [4Fe-4S] cluster site. Residues Gln220, Phe249, Glu276, and Asn322 each coordinate S-adenosyl-L-methionine. Cys349 serves as the catalytic Nucleophile.

The protein belongs to the class I-like SAM-binding methyltransferase superfamily. RNA M5U methyltransferase family. RlmC subfamily.

The catalysed reaction is uridine(747) in 23S rRNA + S-adenosyl-L-methionine = 5-methyluridine(747) in 23S rRNA + S-adenosyl-L-homocysteine + H(+). Catalyzes the formation of 5-methyl-uridine at position 747 (m5U747) in 23S rRNA. The protein is 23S rRNA (uracil(747)-C(5))-methyltransferase RlmC of Actinobacillus pleuropneumoniae serotype 5b (strain L20).